Consider the following 629-residue polypeptide: Arginyl-tRNA--protein transferase 1 (629 aa).

Disordered regions lie at residues 274–298 and 353–405; these read QNNS…TNEP and PDES…ITKE. Positions 282-295 are enriched in low complexity; sequence TTTATTATTTTTTT. Positions 356–396 are enriched in acidic residues; sequence SYDDYVYDGKDDDDDDDDKDEKEDDEDEDQEDDEDEDDGNN.

This sequence belongs to the R-transferase family.

The enzyme catalyses an N-terminal L-alpha-aminoacyl-[protein] + L-arginyl-tRNA(Arg) = an N-terminal L-arginyl-L-aminoacyl-[protein] + tRNA(Arg) + H(+). In terms of biological role, involved in the post-translational conjugation of arginine to the N-terminal aspartate or glutamate of a protein. This arginylation is required for degradation of the protein via the ubiquitin pathway. Does not arginylate cysteine residues. The sequence is that of Arginyl-tRNA--protein transferase 1 (ate1) from Dictyostelium discoideum (Social amoeba).